A 336-amino-acid polypeptide reads, in one-letter code: Mitochondrial thiamine diphosphate carrier 2 (336 aa).

Helical transmembrane passes span 11–27 (RRAL…GGIS), 88–105 (VPAL…FTVL), 127–150 (YLSY…FDLL), 182–199 (LYSG…YAGL), 230–246 (SVSS…AGTF), and 303–322 (GLFP…FVAY). Solcar repeat units follow at residues 11-111 (RRAL…LKTF), 124-210 (LSPY…FKRS), and 231-328 (VSSF…ISDW).

Belongs to the mitochondrial carrier (TC 2.A.29) family. As to expression, ubiquitous.

It localises to the mitochondrion inner membrane. In terms of biological role, mitochondrial transporter that mediates uptake of thiamine diphosphate (ThDP) into mitochondria. This Zea mays (Maize) protein is Mitochondrial thiamine diphosphate carrier 2.